Here is a 65-residue protein sequence, read N- to C-terminus: Large ribosomal subunit protein bL31 (65 aa).

4 residues coordinate Zn(2+): Cys-16, Cys-18, Cys-36, and Cys-39.

It belongs to the bacterial ribosomal protein bL31 family. Type A subfamily. As to quaternary structure, part of the 50S ribosomal subunit. Requires Zn(2+) as cofactor.

Binds the 23S rRNA. This Desulfitobacterium hafniense (strain DSM 10664 / DCB-2) protein is Large ribosomal subunit protein bL31.